Consider the following 68-residue polypeptide: Amphipathic peptide VmCT1 (68 aa).

A signal peptide spans 1-23; sequence MKTQFVILIVAVVLLQLISHSEA. Position 36 is a phenylalanine amide (Phe36). Positions 40 to 68 are excised as a propeptide; sequence GLRNFDDLDDTFEPEMSEADLKYLQDLLR.

Belongs to the non-disulfide-bridged peptide (NDBP) superfamily. Short antimicrobial peptide (group 4) family. Expressed by the venom gland.

Its subcellular location is the secreted. The protein localises to the target cell membrane. Its function is as follows. Cationic amphipathic peptide with antibacterial activities against both Gram-positive and Gram-negative bacteria. Also shows antifungal activities. Is mildly hemolytic against human erythrocytes. In addition, when tested in vitro on the parasite Trypanosoma cruzi (responsible of the Chagas disease), is able to reduce the number of the three forms (epimastigote, trypomastigote and amastigote). Also shows antiplasmodial and cytotoxic activity (tested on Plasmodium gallinaceum, and MCF-7 breast cancer cell line). The chain is Amphipathic peptide VmCT1 from Vaejovis mexicanus smithi (Mexican scorpion).